Here is a 526-residue protein sequence, read N- to C-terminus: Alpha-1,3-mannosyl-glycoprotein 4-beta-N-acetylglucosaminyltransferase A (526 aa).

Residues 1–6 (MRLRNG) lie on the Cytoplasmic side of the membrane. Residues 7–27 (TVATALVFVTSFLTLSWYTTW) traverse the membrane as a helical; Signal-anchor for type II membrane protein segment. The stretch at 28-63 (QNGKEKLIAYQREFLALKERLRVAEHRISQRSSELN) forms a coiled coil. Topologically, residues 28–526 (QNGKEKLIAY…NEIHIKKVTS (499 aa)) are lumenal. N-linked (GlcNAc...) asparagine glycosylation occurs at asparagine 449. Phosphoserine is present on serine 465.

Belongs to the glycosyltransferase 54 family. The cofactor is a divalent metal cation. Post-translationally, N-glycosylated.

It localises to the golgi apparatus membrane. It is found in the secreted. It carries out the reaction N(4)-{beta-D-GlcNAc-(1-&gt;2)-alpha-D-Man-(1-&gt;3)-[beta-D-GlcNAc-(1-&gt;2)-alpha-D-Man-(1-&gt;6)]-beta-D-Man-(1-&gt;4)-beta-D-GlcNAc-(1-&gt;4)-beta-D-GlcNAc}-L-asparaginyl-[protein] + UDP-N-acetyl-alpha-D-glucosamine = N(4)-{beta-D-GlcNAc-(1-&gt;2)-[beta-D-GlcNAc-(1-&gt;4)]-alpha-D-Man-(1-&gt;3)-[beta-D-GlcNAc-(1-&gt;2)-alpha-D-Man-(1-&gt;6)]-beta-D-Man-(1-&gt;4)-beta-D-GlcNAc-(1-&gt;4)-beta-D-GlcNAc}-L-asparaginyl-[protein] + UDP + H(+). It catalyses the reaction an N(4)-{beta-D-GlcNAc-(1-&gt;2)-alpha-D-Man-(1-&gt;3)-[alpha-D-Man-(1-&gt;6)]-beta-D-Man-(1-&gt;4)-beta-D-GlcNAc-(1-&gt;4)-beta-D-GlcNAc}-L-asparaginyl-[protein] + UDP-N-acetyl-alpha-D-glucosamine = an N(4)-{beta-D-GlcNAc-(1-&gt;2)-[beta-D-GlcNAc-(1-&gt;4)]-alpha-D-Man-(1-&gt;3)-[alpha-D-Man-(1-&gt;6)]-beta-D-Man-(1-&gt;4)-beta-D-GlcNAc-(1-&gt;4)-beta-D-GlcNAc}-L-asparaginyl-[protein] + UDP + H(+). The enzyme catalyses an N(4)-{beta-D-GlcNAc-(1-&gt;2)-alpha-D-Man-(1-&gt;3)-[beta-D-GlcNAc-(1-&gt;2)-[beta-D-GlcNAc-(1-&gt;6)]-alpha-D-Man-(1-&gt;6)]-beta-D-Man-(1-&gt;4)-beta-D-GlcNAc-(1-&gt;4)-beta-D-GlcNAc}-L-asparaginyl-[protein] + UDP-N-acetyl-alpha-D-glucosamine = an N(4)-{beta-D-GlcNAc-(1-&gt;2)-[beta-D-GlcNAc-(1-&gt;4)]-alpha-D-Man-(1-&gt;3)-[beta-D-GlcNAc-(1-&gt;2)-[beta-D-GlcNAc-(1-&gt;6)]-alpha-D-Man-(1-&gt;6)]-beta-D-Man-(1-&gt;4)-beta-D-GlcNAc-(1-&gt;4)-beta-D-GlcNAc}-L-asparaginyl-[protein] + UDP + H(+). The catalysed reaction is an N(4)-{beta-D-GlcNAc-(1-&gt;2)-alpha-D-Man-(1-&gt;3)-[beta-D-GlcNAc-(1-&gt;2)-alpha-D-Man-(1-&gt;6)]-beta-D-Man-(1-&gt;4)-beta-D-GlcNAc-(1-&gt;4)-[alpha-L-Fuc-(1-&gt;6)]-beta-D-GlcNAc}-L-asparaginyl-[protein] + UDP-N-acetyl-alpha-D-glucosamine = N(4)-{beta-D-GlcNAc-(1-&gt;2)-[beta-D-GlcNAc-(1-&gt;4)]-alpha-D-Man-(1-&gt;3)-[beta-D-GlcNAc-(1-&gt;2)-alpha-D-Man-(1-&gt;6)]-beta-D-Man-(1-&gt;4)-beta-D-GlcNAc-(1-&gt;4)-[alpha-L-Fuc-(1-&gt;6)]-beta-D-GlcNAc}-asparaginyl-[protein] + UDP + H(+). It carries out the reaction an N(4)-{beta-D-GlcNAc-(1-&gt;2)-alpha-D-Man-(1-&gt;3)-[beta-D-Gal-(1-&gt;4)-beta-D-GlcNAc-(1-&gt;2)-alpha-D-Man-(1-&gt;6)]-beta-D-Man-(1-&gt;4)-beta-D-GlcNAc-(1-&gt;4)-beta-D-GlcNAc}-L-asparaginyl-[protein] + UDP-N-acetyl-alpha-D-glucosamine = an N(4)-{beta-D-GlcNAc-(1-&gt;2)-[beta-D-GlcNAc-(1-&gt;4)]-alpha-D-Man-(1-&gt;3)-[beta-D-Gal-(1-&gt;4)-beta-D-GlcNAc-(1-&gt;2)-alpha-D-Man-(1-&gt;6)]-beta-D-Man-(1-&gt;4)-beta-D-GlcNAc-(1-&gt;4)-beta-D-GlcNAc}-L-asparaginyl-[protein] + UDP + H(+). It catalyses the reaction N(4)-{beta-D-GlcNAc-(1-&gt;2)-alpha-D-Man-(1-&gt;3)-[alpha-D-Man-(1-&gt;3)-{alpha-D-Man-(1-&gt;6)}-alpha-D-Man-(1-&gt;6)]-beta-D-Man-(1-&gt;4)-beta-D-GlcNAc-(1-&gt;4)-beta-D-GlcNAc}-asparaginyl-[protein] + UDP-N-acetyl-alpha-D-glucosamine = N(4)-{beta-D-GlcNAc-(1-&gt;2)-[beta-D-GlcNAc-(1-&gt;4)]-alpha-D-Man-(1-&gt;3)-[alpha-D-Man-(1-&gt;3)-{alpha-D-Man-(1-&gt;6)}-alpha-D-Man-(1-&gt;6)]-beta-D-Man-(1-&gt;4)-beta-D-GlcNAc-(1-&gt;4)-beta-D-GlcNAc}-asparaginyl-[protein] + UDP + H(+). The enzyme catalyses N(4)-{beta-D-GlcNAc-(1-&gt;2)-alpha-D-Man-(1-&gt;3)-beta-D-Man-(1-&gt;4)-beta-D-GlcNAc-(1-&gt;4)-beta-D-GlcNAc}-asparaginyl-[protein] + UDP-N-acetyl-alpha-D-glucosamine = N(4)-{beta-D-GlcNAc-(1-&gt;2)-[beta-D-GlcNAc-(1-&gt;4)]-alpha-D-Man-(1-&gt;3)-beta-D-Man-(1-&gt;4)-beta-D-GlcNAc-(1-&gt;4)-beta-D-GlcNAc}-asparaginyl-[protein] + UDP + H(+). It participates in protein modification; protein glycosylation. With respect to regulation, inhibited by UDP. Glycosyltransferase that catalyze the transfer of GlcNAc from UDP-GlcNAc to the GlcNAcbeta1-2Manalpha1-3 arm of the core structure of N-linked glycans through a beta1-4 linkage and participates in the production of tri- and tetra-antennary N-linked sugar chains. Involved in glucose transport by mediating SLC2A2/GLUT2 glycosylation, thereby controlling cell-surface expression of SLC2A2 in pancreatic beta cells. The polypeptide is Alpha-1,3-mannosyl-glycoprotein 4-beta-N-acetylglucosaminyltransferase A (Rattus norvegicus (Rat)).